Consider the following 358-residue polypeptide: Holliday junction branch migration complex subunit RuvB (358 aa).

The large ATPase domain (RuvB-L) stretch occupies residues 1–183 (MAEPSLVSGG…FGFTGHLEFY (183 aa)). Residues leucine 22, arginine 23, glycine 64, lysine 67, threonine 68, threonine 69, 130 to 132 (EDF), arginine 173, tyrosine 183, and arginine 220 contribute to the ATP site. Residue threonine 68 coordinates Mg(2+). Residues 184–254 (SVAELELVLR…SASAALDMYE (71 aa)) are small ATPAse domain (RuvB-S). The tract at residues 257–358 (ERGLDRLDRS…NHAESVDTVG (102 aa)) is head domain (RuvB-H). 2 residues coordinate DNA: arginine 312 and arginine 317.

The protein belongs to the RuvB family. Homohexamer. Forms an RuvA(8)-RuvB(12)-Holliday junction (HJ) complex. HJ DNA is sandwiched between 2 RuvA tetramers; dsDNA enters through RuvA and exits via RuvB. An RuvB hexamer assembles on each DNA strand where it exits the tetramer. Each RuvB hexamer is contacted by two RuvA subunits (via domain III) on 2 adjacent RuvB subunits; this complex drives branch migration. In the full resolvosome a probable DNA-RuvA(4)-RuvB(12)-RuvC(2) complex forms which resolves the HJ.

The protein resides in the cytoplasm. It carries out the reaction ATP + H2O = ADP + phosphate + H(+). The RuvA-RuvB-RuvC complex processes Holliday junction (HJ) DNA during genetic recombination and DNA repair, while the RuvA-RuvB complex plays an important role in the rescue of blocked DNA replication forks via replication fork reversal (RFR). RuvA specifically binds to HJ cruciform DNA, conferring on it an open structure. The RuvB hexamer acts as an ATP-dependent pump, pulling dsDNA into and through the RuvAB complex. RuvB forms 2 homohexamers on either side of HJ DNA bound by 1 or 2 RuvA tetramers; 4 subunits per hexamer contact DNA at a time. Coordinated motions by a converter formed by DNA-disengaged RuvB subunits stimulates ATP hydrolysis and nucleotide exchange. Immobilization of the converter enables RuvB to convert the ATP-contained energy into a lever motion, pulling 2 nucleotides of DNA out of the RuvA tetramer per ATP hydrolyzed, thus driving DNA branch migration. The RuvB motors rotate together with the DNA substrate, which together with the progressing nucleotide cycle form the mechanistic basis for DNA recombination by continuous HJ branch migration. Branch migration allows RuvC to scan DNA until it finds its consensus sequence, where it cleaves and resolves cruciform DNA. In Paenarthrobacter aurescens (strain TC1), this protein is Holliday junction branch migration complex subunit RuvB.